Consider the following 208-residue polypeptide: Ribosomal RNA large subunit methyltransferase E (208 aa).

Residues G63, W65, D83, D99, and D124 each coordinate S-adenosyl-L-methionine. K164 serves as the catalytic Proton acceptor.

The protein belongs to the class I-like SAM-binding methyltransferase superfamily. RNA methyltransferase RlmE family.

It is found in the cytoplasm. The catalysed reaction is uridine(2552) in 23S rRNA + S-adenosyl-L-methionine = 2'-O-methyluridine(2552) in 23S rRNA + S-adenosyl-L-homocysteine + H(+). Its function is as follows. Specifically methylates the uridine in position 2552 of 23S rRNA at the 2'-O position of the ribose in the fully assembled 50S ribosomal subunit. The chain is Ribosomal RNA large subunit methyltransferase E from Salmonella arizonae (strain ATCC BAA-731 / CDC346-86 / RSK2980).